Reading from the N-terminus, the 278-residue chain is Pantothenate synthetase (278 aa).

Residue 26–33 (MGNLHEGH) participates in ATP binding. The active-site Proton donor is the His-33. Gln-57 contributes to the (R)-pantoate binding site. Gln-57 lines the beta-alanine pocket. 144-147 (GKKD) serves as a coordination point for ATP. Residue Gln-150 coordinates (R)-pantoate. Residues Gly-173 and 181–184 (LSSR) contribute to the ATP site.

The protein belongs to the pantothenate synthetase family. Homodimer.

It is found in the cytoplasm. It carries out the reaction (R)-pantoate + beta-alanine + ATP = (R)-pantothenate + AMP + diphosphate + H(+). It participates in cofactor biosynthesis; (R)-pantothenate biosynthesis; (R)-pantothenate from (R)-pantoate and beta-alanine: step 1/1. Catalyzes the condensation of pantoate with beta-alanine in an ATP-dependent reaction via a pantoyl-adenylate intermediate. The protein is Pantothenate synthetase of Neisseria meningitidis serogroup C / serotype 2a (strain ATCC 700532 / DSM 15464 / FAM18).